A 382-amino-acid chain; its full sequence is Pyrimidine monooxygenase RutA (382 aa).

Residues 68 to 69 (IK), Asn-134, Glu-143, 159 to 160 (RY), and Ser-209 each bind FMN.

The protein belongs to the NtaA/SnaA/DszA monooxygenase family. RutA subfamily.

The enzyme catalyses uracil + FMNH2 + NADH + O2 = (Z)-3-ureidoacrylate + FMN + NAD(+) + H2O + H(+). It carries out the reaction thymine + FMNH2 + NADH + O2 = (Z)-2-methylureidoacrylate + FMN + NAD(+) + H2O + H(+). Its function is as follows. Catalyzes the pyrimidine ring opening between N-3 and C-4 by an unusual flavin hydroperoxide-catalyzed mechanism, adding oxygen atoms in the process to yield ureidoacrylate peracid, that immediately reacts with FMN forming ureidoacrylate and FMN-N(5)-oxide. The FMN-N(5)-oxide reacts spontaneously with NADH to produce FMN. Requires the flavin reductase RutF to regenerate FMN in vivo. The protein is Pyrimidine monooxygenase RutA of Escherichia coli (strain B / BL21-DE3).